We begin with the raw amino-acid sequence, 136 residues long: MSKDTIANILTSIRNADMNKKRTVRIPYTNITENILKILLREGFIENMRKHQESNNLFFVLTLRHRRKRNRKGPDKTVLNLKRISRPGLRIYSNYQRIPRILGGMGIVILSTSRGIMTDREARLEGIGGEILCYIW.

It belongs to the universal ribosomal protein uS8 family. Part of the 30S ribosomal subunit.

Its subcellular location is the plastid. The protein resides in the chloroplast. Functionally, one of the primary rRNA binding proteins, it binds directly to 16S rRNA central domain where it helps coordinate assembly of the platform of the 30S subunit. The sequence is that of Small ribosomal subunit protein uS8c (rps8) from Morus indica (Mulberry).